The chain runs to 74 residues: Putative membrane protein insertion efficiency factor (74 aa).

This sequence belongs to the UPF0161 family.

The protein localises to the cell inner membrane. Could be involved in insertion of integral membrane proteins into the membrane. The protein is Putative membrane protein insertion efficiency factor of Leptospira interrogans serogroup Icterohaemorrhagiae serovar copenhageni (strain Fiocruz L1-130).